The primary structure comprises 615 residues: TORTIFOLIA1-like protein 3 (615 aa).

HEAT repeat units lie at residues 44–81 (GNLQ…SLPL), 86–123 (PFLS…RTTK), 125–163 (PFYS…SASD), 168–205 (RLGQ…AGGL), and 213–250 (GGLK…MERN). Residues 288 to 446 (VPDLSEEVSP…HHVLSENPNS (159 aa)) are disordered. Positions 318–347 (RVGSTPAKSRTHLVNRSTPPGSSLATTARK) are enriched in polar residues. A compositionally biased stretch (basic and acidic residues) spans 391 to 406 (DEQHCDHDENAKETSH). Residues 407-426 (SSHNTVQKLGGVSSSLNGNI) are compositionally biased toward polar residues. Position 456 is a phosphoserine (Ser-456).

The polypeptide is TORTIFOLIA1-like protein 3 (Arabidopsis thaliana (Mouse-ear cress)).